A 390-amino-acid polypeptide reads, in one-letter code: DNA primase small subunit PriS (390 aa).

Residues D98, D100, and D296 contribute to the active site.

The protein belongs to the eukaryotic-type primase small subunit family. Heterodimer of a small subunit (PriS) and a large subunit (PriL). The cofactor is Mg(2+). Requires Mn(2+) as cofactor.

Functionally, catalytic subunit of DNA primase, an RNA polymerase that catalyzes the synthesis of short RNA molecules used as primers for DNA polymerase during DNA replication. The small subunit contains the primase catalytic core and has DNA synthesis activity on its own. Binding to the large subunit stabilizes and modulates the activity, increasing the rate of DNA synthesis while decreasing the length of the DNA fragments, and conferring RNA synthesis capability. The DNA polymerase activity may enable DNA primase to also catalyze primer extension after primer synthesis. May also play a role in DNA repair. This Methanococcoides burtonii (strain DSM 6242 / NBRC 107633 / OCM 468 / ACE-M) protein is DNA primase small subunit PriS.